We begin with the raw amino-acid sequence, 91 residues long: DNA/RNA-binding protein Alba (91 aa).

The protein belongs to the histone-like Alba family.

It localises to the cytoplasm. The protein resides in the chromosome. Its function is as follows. Binds double-stranded DNA tightly but without sequence specificity. Involved in DNA compaction. The polypeptide is DNA/RNA-binding protein Alba (Methanoculleus marisnigri (strain ATCC 35101 / DSM 1498 / JR1)).